The sequence spans 186 residues: Small ribosomal subunit protein uS7 (186 aa).

Belongs to the universal ribosomal protein uS7 family. In terms of assembly, part of the 30S ribosomal subunit.

In terms of biological role, one of the primary rRNA binding proteins, it binds directly to 16S rRNA where it nucleates assembly of the head domain of the 30S subunit. Is located at the subunit interface close to the decoding center. In Methanothermobacter thermautotrophicus (strain ATCC 29096 / DSM 1053 / JCM 10044 / NBRC 100330 / Delta H) (Methanobacterium thermoautotrophicum), this protein is Small ribosomal subunit protein uS7.